The following is a 295-amino-acid chain: Elongation factor Ts (295 aa).

An involved in Mg(2+) ion dislocation from EF-Tu region spans residues 80–83 (TDFV).

The protein belongs to the EF-Ts family.

Its subcellular location is the cytoplasm. Functionally, associates with the EF-Tu.GDP complex and induces the exchange of GDP to GTP. It remains bound to the aminoacyl-tRNA.EF-Tu.GTP complex up to the GTP hydrolysis stage on the ribosome. This chain is Elongation factor Ts, found in Lysinibacillus sphaericus (strain C3-41).